The following is a 258-amino-acid chain: Imidazole glycerol phosphate synthase subunit HisF (258 aa).

Active-site residues include Asp11 and Asp130.

The protein belongs to the HisA/HisF family. Heterodimer of HisH and HisF.

The protein localises to the cytoplasm. The catalysed reaction is 5-[(5-phospho-1-deoxy-D-ribulos-1-ylimino)methylamino]-1-(5-phospho-beta-D-ribosyl)imidazole-4-carboxamide + L-glutamine = D-erythro-1-(imidazol-4-yl)glycerol 3-phosphate + 5-amino-1-(5-phospho-beta-D-ribosyl)imidazole-4-carboxamide + L-glutamate + H(+). The protein operates within amino-acid biosynthesis; L-histidine biosynthesis; L-histidine from 5-phospho-alpha-D-ribose 1-diphosphate: step 5/9. Its function is as follows. IGPS catalyzes the conversion of PRFAR and glutamine to IGP, AICAR and glutamate. The HisF subunit catalyzes the cyclization activity that produces IGP and AICAR from PRFAR using the ammonia provided by the HisH subunit. This chain is Imidazole glycerol phosphate synthase subunit HisF, found in Methylorubrum extorquens (strain CM4 / NCIMB 13688) (Methylobacterium extorquens).